The primary structure comprises 353 residues: Phospho-N-acetylmuramoyl-pentapeptide-transferase (353 aa).

10 consecutive transmembrane segments (helical) span residues 24-44 (LGFF…ILWA), 66-86 (TPTM…VLCA), 88-108 (LGNL…FVGF), 129-149 (FGML…KGLD), 160-180 (PLFE…FLST), 192-212 (GLAS…VYVA), 229-249 (VGEL…FLWY), 256-276 (VFMG…NAIV), 281-301 (ILLV…ILQV), and 330-350 (KVIV…LLSL).

The protein belongs to the glycosyltransferase 4 family. MraY subfamily. It depends on Mg(2+) as a cofactor.

The protein resides in the cell inner membrane. It carries out the reaction UDP-N-acetyl-alpha-D-muramoyl-L-alanyl-gamma-D-glutamyl-meso-2,6-diaminopimeloyl-D-alanyl-D-alanine + di-trans,octa-cis-undecaprenyl phosphate = di-trans,octa-cis-undecaprenyl diphospho-N-acetyl-alpha-D-muramoyl-L-alanyl-D-glutamyl-meso-2,6-diaminopimeloyl-D-alanyl-D-alanine + UMP. The protein operates within cell wall biogenesis; peptidoglycan biosynthesis. In terms of biological role, catalyzes the initial step of the lipid cycle reactions in the biosynthesis of the cell wall peptidoglycan: transfers peptidoglycan precursor phospho-MurNAc-pentapeptide from UDP-MurNAc-pentapeptide onto the lipid carrier undecaprenyl phosphate, yielding undecaprenyl-pyrophosphoryl-MurNAc-pentapeptide, known as lipid I. This is Phospho-N-acetylmuramoyl-pentapeptide-transferase from Helicobacter pylori (strain HPAG1).